A 605-amino-acid chain; its full sequence is DNA mismatch repair protein MutL (605 aa).

It belongs to the DNA mismatch repair MutL/HexB family.

Functionally, this protein is involved in the repair of mismatches in DNA. It is required for dam-dependent methyl-directed DNA mismatch repair. May act as a 'molecular matchmaker', a protein that promotes the formation of a stable complex between two or more DNA-binding proteins in an ATP-dependent manner without itself being part of a final effector complex. In Sinorhizobium medicae (strain WSM419) (Ensifer medicae), this protein is DNA mismatch repair protein MutL.